A 128-amino-acid polypeptide reads, in one-letter code: MEGKTVIVSLLLLSIVVGQIQVEAKSCCPSTTARNIYNTCRFGGGSRTLCAKLSGCKIVSGTTCPKLSIPEVTGEAVNEYCKLGCSFSVCRAITTLQNTDAGEVLNEAAEKCNNACSTLCTKNSIETA.

A signal peptide spans 1-24; it reads MEGKTVIVSLLLLSIVVGQIQVEA. Intrachain disulfides connect cysteine 27-cysteine 64, cysteine 28-cysteine 56, and cysteine 40-cysteine 50. Residues 67 to 128 constitute a propeptide, acidic domain; it reads LSIPEVTGEA…LCTKNSIETA (62 aa).

Belongs to the plant thionin (TC 1.C.44) family. Expressed in trichomes, that are stiff epidermal hairs located on the surface of petioles and leaves.

The protein localises to the secreted. Plant defense protein that causes pain by probable disruption of cell membranes. Shows cytotoxic activity against the neuroblastoma cell line SH-SY5Y and slightly weaker activity against several non-neuronal cell lines. In vivo, intraplantar injection into mice causes several nocifensive responses, along with swelling and redness. In Urtica ferox (Tree nettle), this protein is DELTA-urthionin-Uf1a.